The primary structure comprises 120 residues: MSVYVDFDVPADLEDDALEALEVARDTGSVKKGTNETTKAVERGNAELVFVAEDVSPEEVVMHLPEIATEKEIPYVFVGTQDDIGHAAGLQVGSAAAAIVDAGEANGEVEDIAEKVEELQ.

This sequence belongs to the eukaryotic ribosomal protein eL8 family. Part of the 50S ribosomal subunit. Probably part of the RNase P complex.

The protein resides in the cytoplasm. In terms of biological role, multifunctional RNA-binding protein that recognizes the K-turn motif in ribosomal RNA, the RNA component of RNase P, box H/ACA, box C/D and box C'/D' sRNAs. This Natronomonas pharaonis (strain ATCC 35678 / DSM 2160 / CIP 103997 / JCM 8858 / NBRC 14720 / NCIMB 2260 / Gabara) (Halobacterium pharaonis) protein is Large ribosomal subunit protein eL8.